A 353-amino-acid polypeptide reads, in one-letter code: MTIAIGKSSKQPQGLFDSMDDWLRRDRFVFVGWSGLLLFPCAYFALGGWLTGTTFVTSWYTHGLASSYLEGCNFLTAAVSTPANSLAHSLLLLWGPEAQGDFTRWCQLGGLWAFVAFHGAFGLIGFMLRQFEIARSVGLRPYNAIAFTGPIAVFVSVFLIYPLGQSGWFFAPSFGVAAIFRFILFFQGFHNWTLNPFHMMGVAGVLGAALLCAIHGATVENTIFEDGDGANTFRAFNPTQSEETYSMVTANRFWSQIFGVAFANKRWLHFFMLFVPVTGLWMSAIGVVGLALNLRAYDFVSQEIRAAEDPEFETFYTKNILLNEGIRAWMAAQDQPHENLVFPEEVLPRGNAL.

Position 2 is an N-acetylthreonine (threonine 2). Residue threonine 2 is modified to Phosphothreonine. A helical transmembrane segment spans residues 41-61; that stretch reads CAYFALGGWLTGTTFVTSWYT. A chlorophyll a-binding site is contributed by histidine 118. Residues 125–141 form a helical membrane-spanning segment; sequence GFMLRQFEIARSVGLRP. Residues glutamine 130 and asparagine 143 each contribute to the pheophytin a site. The chain crosses the membrane as a helical span at residues 153 to 166; that stretch reads VFVSVFLIYPLGQS. Histidine 198 contributes to the chlorophyll a binding site. Residues 208 to 228 form a helical membrane-spanning segment; that stretch reads AALLCAIHGATVENTIFEDGD. A plastoquinone-binding residues include histidine 215 and phenylalanine 262. Residue histidine 215 participates in Fe cation binding. Fe cation is bound at residue histidine 269. The helical transmembrane segment at 279-295 threads the bilayer; that stretch reads GLWMSAIGVVGLALNLR.

Belongs to the reaction center PufL/M/PsbA/D family. As to quaternary structure, PSII is composed of 1 copy each of membrane proteins PsbA, PsbB, PsbC, PsbD, PsbE, PsbF, PsbH, PsbI, PsbJ, PsbK, PsbL, PsbM, PsbT, PsbX, PsbY, PsbZ, Psb30/Ycf12, at least 3 peripheral proteins of the oxygen-evolving complex and a large number of cofactors. It forms dimeric complexes. The D1/D2 heterodimer binds P680, chlorophylls that are the primary electron donor of PSII, and subsequent electron acceptors. It shares a non-heme iron and each subunit binds pheophytin, quinone, additional chlorophylls, carotenoids and lipids. There is also a Cl(-1) ion associated with D1 and D2, which is required for oxygen evolution. The PSII complex binds additional chlorophylls, carotenoids and specific lipids. is required as a cofactor.

It localises to the plastid. The protein resides in the chloroplast thylakoid membrane. The catalysed reaction is 2 a plastoquinone + 4 hnu + 2 H2O = 2 a plastoquinol + O2. In terms of biological role, photosystem II (PSII) is a light-driven water:plastoquinone oxidoreductase that uses light energy to abstract electrons from H(2)O, generating O(2) and a proton gradient subsequently used for ATP formation. It consists of a core antenna complex that captures photons, and an electron transfer chain that converts photonic excitation into a charge separation. The D1/D2 (PsbA/PsbD) reaction center heterodimer binds P680, the primary electron donor of PSII as well as several subsequent electron acceptors. D2 is needed for assembly of a stable PSII complex. The protein is Photosystem II D2 protein of Staurastrum punctulatum (Green alga).